Reading from the N-terminus, the 143-residue chain is Large-conductance mechanosensitive channel (143 aa).

2 helical membrane-spanning segments follow: residues 19–39 (VGVI…GDLI) and 81–101 (GSFL…FGVI).

This sequence belongs to the MscL family. As to quaternary structure, homopentamer.

Its subcellular location is the cell inner membrane. Functionally, channel that opens in response to stretch forces in the membrane lipid bilayer. May participate in the regulation of osmotic pressure changes within the cell. The sequence is that of Large-conductance mechanosensitive channel from Rhodopseudomonas palustris (strain BisB5).